Consider the following 257-residue polypeptide: NAD-capped RNA hydrolase NudC (257 aa).

R69 contributes to the substrate binding site. 2 residues coordinate Zn(2+): C98 and C101. E111 contacts substrate. Positions 116 and 119 each coordinate Zn(2+). Residue Y124 participates in substrate binding. The Nudix hydrolase domain maps to 125–248 (PQIAPCIIVA…TVARRLIEDT (124 aa)). A divalent metal cation contacts are provided by A158, E174, and E178. A Nudix box motif is present at residues 159–180 (GFVEVGETLEQAVAREVMEESG). 192–199 (QPWPFPQS) is a substrate binding site. E219 provides a ligand contact to a divalent metal cation. Position 241 (A241) interacts with substrate.

This sequence belongs to the Nudix hydrolase family. NudC subfamily. Homodimer. Mg(2+) is required as a cofactor. Mn(2+) serves as cofactor. It depends on Zn(2+) as a cofactor.

The catalysed reaction is a 5'-end NAD(+)-phospho-ribonucleoside in mRNA + H2O = a 5'-end phospho-adenosine-phospho-ribonucleoside in mRNA + beta-nicotinamide D-ribonucleotide + 2 H(+). It carries out the reaction NAD(+) + H2O = beta-nicotinamide D-ribonucleotide + AMP + 2 H(+). The enzyme catalyses NADH + H2O = reduced beta-nicotinamide D-ribonucleotide + AMP + 2 H(+). MRNA decapping enzyme that specifically removes the nicotinamide adenine dinucleotide (NAD) cap from a subset of mRNAs by hydrolyzing the diphosphate linkage to produce nicotinamide mononucleotide (NMN) and 5' monophosphate mRNA. The NAD-cap is present at the 5'-end of some mRNAs and stabilizes RNA against 5'-processing. Has preference for mRNAs with a 5'-end purine. Catalyzes the hydrolysis of a broad range of dinucleotide pyrophosphates. This Citrobacter koseri (strain ATCC BAA-895 / CDC 4225-83 / SGSC4696) protein is NAD-capped RNA hydrolase NudC.